Here is a 415-residue protein sequence, read N- to C-terminus: Leucine-rich repeat-containing protein 34 (415 aa).

LRR repeat units follow at residues 246–272 (TLRY…LKSN) and 274–296 (TLEV…LSET).

In terms of assembly, interacts with NPM1 and NCL.

Its subcellular location is the nucleus. It localises to the nucleolus. It is found in the cytoplasm. Its function is as follows. Highly expressed in stem cells where it may be involved in regulation of pluripotency. In embryonic stem cells (ESCs), important for normal expression of the pluripotency regulators POU5F1/OCT4 and KLF4. Also important for expression of the ectodermal marker gene NES and the endodermal marker gene GATA4. Promotes stem cell proliferation in vitro. The sequence is that of Leucine-rich repeat-containing protein 34 (Lrrc34) from Rattus norvegicus (Rat).